An 83-amino-acid chain; its full sequence is Arminin 4364 (83 aa).

The signal sequence occupies residues 1-18 (MKTVFAILFLAFIALTYA). Positions 19-55 (RSYEDVKEEIKNEVEKEILEDLEKETDELNERKINDA) are excised as a propeptide. A Valine amide modification is found at valine 80.

The protein belongs to the arminin family. Expressed in entodermal epithelium along the body column.

It localises to the secreted. The protein localises to the target cell membrane. Its function is as follows. Antimicrobial peptide with a broad-spectrum antimicrobial activity. Keeps its antibacterial activity under a wide range of salt concentrations that mimic physiological conditions of human blood, which is surprising, since Hydra is an obligate freshwater animal with nearly no salt tolerance. Does not affect red blood cells. The chain is Arminin 4364 from Hydra vulgaris (Hydra).